The following is a 407-amino-acid chain: 1-deoxy-D-xylulose 5-phosphate reductoisomerase (407 aa).

6 residues coordinate NADPH: Thr25, Gly26, Ser27, Ile28, Asn53, and Asn136. Residue Lys137 participates in 1-deoxy-D-xylulose 5-phosphate binding. Glu138 is a binding site for NADPH. Asp162 contributes to the Mn(2+) binding site. Ser163, Glu164, Ser188, and His211 together coordinate 1-deoxy-D-xylulose 5-phosphate. Glu164 provides a ligand contact to Mn(2+). Gly217 serves as a coordination point for NADPH. Residues Ser224, Asn229, Lys230, and Glu233 each contribute to the 1-deoxy-D-xylulose 5-phosphate site. Glu233 is a binding site for Mn(2+).

The protein belongs to the DXR family. It depends on Mg(2+) as a cofactor. The cofactor is Mn(2+).

The catalysed reaction is 2-C-methyl-D-erythritol 4-phosphate + NADP(+) = 1-deoxy-D-xylulose 5-phosphate + NADPH + H(+). It participates in isoprenoid biosynthesis; isopentenyl diphosphate biosynthesis via DXP pathway; isopentenyl diphosphate from 1-deoxy-D-xylulose 5-phosphate: step 1/6. Its function is as follows. Catalyzes the NADPH-dependent rearrangement and reduction of 1-deoxy-D-xylulose-5-phosphate (DXP) to 2-C-methyl-D-erythritol 4-phosphate (MEP). The sequence is that of 1-deoxy-D-xylulose 5-phosphate reductoisomerase from Rhodopseudomonas palustris (strain TIE-1).